The primary structure comprises 327 residues: Phenylalanine--tRNA ligase alpha subunit (327 aa).

Residue glutamate 252 coordinates Mg(2+).

This sequence belongs to the class-II aminoacyl-tRNA synthetase family. Phe-tRNA synthetase alpha subunit type 1 subfamily. As to quaternary structure, tetramer of two alpha and two beta subunits. Requires Mg(2+) as cofactor.

It localises to the cytoplasm. It carries out the reaction tRNA(Phe) + L-phenylalanine + ATP = L-phenylalanyl-tRNA(Phe) + AMP + diphosphate + H(+). The polypeptide is Phenylalanine--tRNA ligase alpha subunit (Shewanella frigidimarina (strain NCIMB 400)).